The sequence spans 548 residues: Membrane protein insertase YidC (548 aa).

Residues 6–26 (NLLVIALLFVSFMIWQAWEQD) form a helical membrane-spanning segment. Residues 28 to 56 (NPQPQTQQTTQTTTTAAGSAADQGVPASG) are disordered. The span at 29 to 42 (PQPQTQQTTQTTTT) shows a compositional bias: low complexity. 4 helical membrane-spanning segments follow: residues 350 to 370 (FVGN…GIMY), 424 to 444 (FPLI…MGSI), 458 to 478 (LSAQ…MFFI), and 499 to 519 (PVIF…YYIV).

The protein belongs to the OXA1/ALB3/YidC family. Type 1 subfamily. In terms of assembly, interacts with the Sec translocase complex via SecD. Specifically interacts with transmembrane segments of nascent integral membrane proteins during membrane integration.

It localises to the cell inner membrane. In terms of biological role, required for the insertion and/or proper folding and/or complex formation of integral membrane proteins into the membrane. Involved in integration of membrane proteins that insert both dependently and independently of the Sec translocase complex, as well as at least some lipoproteins. Aids folding of multispanning membrane proteins. This Salmonella heidelberg (strain SL476) protein is Membrane protein insertase YidC.